Consider the following 126-residue polypeptide: Urease subunit beta (126 aa).

This sequence belongs to the urease beta subunit family. Heterotrimer of UreA (gamma), UreB (beta) and UreC (alpha) subunits. Three heterotrimers associate to form the active enzyme.

It is found in the cytoplasm. The enzyme catalyses urea + 2 H2O + H(+) = hydrogencarbonate + 2 NH4(+). The protein operates within nitrogen metabolism; urea degradation; CO(2) and NH(3) from urea (urease route): step 1/1. This is Urease subunit beta from Gloeothece citriformis (strain PCC 7424) (Cyanothece sp. (strain PCC 7424)).